Consider the following 281-residue polypeptide: Apolipoprotein E (281 aa).

An N-terminal signal peptide occupies residues 1–18; sequence MKVLWAALLIALLAGCQG. Tandem repeats lie at residues 82-103, 104-125, 126-147, 148-169, and 198-219. The 5 X 22 AA approximate tandem repeats stretch occupies residues 82-219; that stretch reads ALMDETMKEL…RLDEVKEQVE (138 aa). Methionine sulfoxide is present on M145. Position 149 is a phosphoserine (S149). Residues 160–170 are LDL and other lipoprotein receptors binding; the sequence is HLRKLRTVSYT. Heparin is bound by residues 164 to 167 and 193 to 200; these read LRTV and GERLRTRM. The segment at 230-281 is homooligomerization; sequence QQMRLQAEAFQARLKSWFEPLVEDMQRQWAGLVEKVQAAVGASAAPVPSDNH. The segment at 242-254 is specificity for association with VLDL; that stretch reads RLKSWFEPLVEDM.

The protein belongs to the apolipoprotein A1/A4/E family. As to quaternary structure, homotetramer. May interact with ABCA1; functionally associated with ABCA1 in the biogenesis of HDLs. May interact with APP/A4 amyloid-beta peptide; the interaction is extremely stable in vitro but its physiological significance is unclear. May interact with MAPT. May interact with MAP2. In the cerebrospinal fluid, interacts with secreted SORL1. Interacts with PMEL; this allows the loading of PMEL luminal fragment on ILVs to induce fibril nucleation. Post-translationally, APOE exists as multiple glycosylated and sialylated glycoforms within cells and in plasma. The extent of glycosylation and sialylation are tissue and context specific. In terms of processing, glycated in plasma VLDL. Phosphorylated by FAM20C in the extracellular medium.

The protein localises to the secreted. The protein resides in the extracellular space. Its subcellular location is the extracellular matrix. It localises to the extracellular vesicle. It is found in the endosome. The protein localises to the multivesicular body. APOE is an apolipoprotein, a protein associating with lipid particles, that mainly functions in lipoprotein-mediated lipid transport between organs via the plasma and interstitial fluids. APOE is a core component of plasma lipoproteins and is involved in their production, conversion and clearance. Apolipoproteins are amphipathic molecules that interact both with lipids of the lipoprotein particle core and the aqueous environment of the plasma. As such, APOE associates with chylomicrons, chylomicron remnants, very low density lipoproteins (VLDL) and intermediate density lipoproteins (IDL) but shows a preferential binding to high-density lipoproteins (HDL). It also binds a wide range of cellular receptors including the LDL receptor/LDLR, the LDL receptor-related proteins LRP1, LRP2 and LRP8 and the very low-density lipoprotein receptor/VLDLR that mediate the cellular uptake of the APOE-containing lipoprotein particles. Finally, APOE also has a heparin-binding activity and binds heparan-sulfate proteoglycans on the surface of cells, a property that supports the capture and the receptor-mediated uptake of APOE-containing lipoproteins by cells. A main function of APOE is to mediate lipoprotein clearance through the uptake of chylomicrons, VLDLs, and HDLs by hepatocytes. APOE is also involved in the biosynthesis by the liver of VLDLs as well as their uptake by peripheral tissues ensuring the delivery of triglycerides and energy storage in muscle, heart and adipose tissues. By participating in the lipoprotein-mediated distribution of lipids among tissues, APOE plays a critical role in plasma and tissues lipid homeostasis. APOE is also involved in two steps of reverse cholesterol transport, the HDLs-mediated transport of cholesterol from peripheral tissues to the liver, and thereby plays an important role in cholesterol homeostasis. First, it is functionally associated with ABCA1 in the biogenesis of HDLs in tissues. Second, it is enriched in circulating HDLs and mediates their uptake by hepatocytes. APOE also plays an important role in lipid transport in the central nervous system, regulating neuron survival and sprouting. The polypeptide is Apolipoprotein E (APOE) (Aotus nancymaae (Ma's night monkey)).